The following is a 136-amino-acid chain: Large ribosomal subunit protein uL16c (136 aa).

This sequence belongs to the universal ribosomal protein uL16 family. As to quaternary structure, part of the 50S ribosomal subunit.

The protein localises to the plastid. It is found in the chloroplast. This is Large ribosomal subunit protein uL16c from Oryza sativa (Rice).